The primary structure comprises 245 residues: Probable phosphatase PMI1003 (245 aa).

9 residues coordinate Zn(2+): H7, H9, H15, H40, E73, H101, H131, D192, and H194.

Belongs to the PHP family. As to quaternary structure, homotrimer. Zn(2+) is required as a cofactor.

This chain is Probable phosphatase PMI1003, found in Proteus mirabilis (strain HI4320).